Consider the following 201-residue polypeptide: Small ribosomal subunit protein uS4c (201 aa).

The tract at residues 15–43 (LGALPGLTSKRPTPGSDLRNQSRSGKRSQ) is disordered. Positions 89-149 (MRLDNILFRL…DEQKSRALIQ (61 aa)) constitute an S4 RNA-binding domain.

Belongs to the universal ribosomal protein uS4 family. In terms of assembly, part of the 30S ribosomal subunit. Contacts protein S5. The interaction surface between S4 and S5 is involved in control of translational fidelity.

Its subcellular location is the plastid. It localises to the chloroplast. Functionally, one of the primary rRNA binding proteins, it binds directly to 16S rRNA where it nucleates assembly of the body of the 30S subunit. Its function is as follows. With S5 and S12 plays an important role in translational accuracy. The sequence is that of Small ribosomal subunit protein uS4c (rps4) from Nandina domestica (Heavenly bamboo).